Here is a 1027-residue protein sequence, read N- to C-terminus: Protein translocase subunit SecA (1027 aa).

Residues Gln143, 161 to 165 (GEGKT), and Asp661 contribute to the ATP site. Residues 981–1027 (EESGTSNADNAGDNGPQTVIAEKKPGRNDLCPCGSGKKYKNCHGQQP) form a disordered region. The Zn(2+) site is built by Cys1011, Cys1013, Cys1022, and His1023.

The protein belongs to the SecA family. In terms of assembly, monomer and homodimer. Part of the essential Sec protein translocation apparatus which comprises SecA, SecYEG and auxiliary proteins SecDF. Other proteins may also be involved. It depends on Zn(2+) as a cofactor.

It localises to the cell inner membrane. It is found in the cytoplasm. It catalyses the reaction ATP + H2O + cellular proteinSide 1 = ADP + phosphate + cellular proteinSide 2.. In terms of biological role, part of the Sec protein translocase complex. Interacts with the SecYEG preprotein conducting channel. Has a central role in coupling the hydrolysis of ATP to the transfer of proteins into and across the cell membrane, serving as an ATP-driven molecular motor driving the stepwise translocation of polypeptide chains across the membrane. This chain is Protein translocase subunit SecA, found in Chlorobium limicola (strain DSM 245 / NBRC 103803 / 6330).